Consider the following 351-residue polypeptide: N-acetyl-gamma-glutamyl-phosphate reductase (351 aa).

Residue Cys154 is part of the active site.

Belongs to the NAGSA dehydrogenase family. Type 1 subfamily.

The protein resides in the cytoplasm. The catalysed reaction is N-acetyl-L-glutamate 5-semialdehyde + phosphate + NADP(+) = N-acetyl-L-glutamyl 5-phosphate + NADPH + H(+). Its pathway is amino-acid biosynthesis; L-arginine biosynthesis; N(2)-acetyl-L-ornithine from L-glutamate: step 3/4. Its function is as follows. Catalyzes the NADPH-dependent reduction of N-acetyl-5-glutamyl phosphate to yield N-acetyl-L-glutamate 5-semialdehyde. The polypeptide is N-acetyl-gamma-glutamyl-phosphate reductase (Prochlorococcus marinus (strain MIT 9515)).